A 93-amino-acid chain; its full sequence is Translation initiation factor IF-1 (93 aa).

Positions 1-72 (MAKEELIQFE…EKGRLIFRHK (72 aa)) constitute an S1-like domain. Residues 70–93 (RHKDERPGGGPPRGAPPRGQFRRR) are disordered.

This sequence belongs to the IF-1 family. As to quaternary structure, component of the 30S ribosomal translation pre-initiation complex which assembles on the 30S ribosome in the order IF-2 and IF-3, IF-1 and N-formylmethionyl-tRNA(fMet); mRNA recruitment can occur at any time during PIC assembly.

The protein resides in the cytoplasm. Its function is as follows. One of the essential components for the initiation of protein synthesis. Stabilizes the binding of IF-2 and IF-3 on the 30S subunit to which N-formylmethionyl-tRNA(fMet) subsequently binds. Helps modulate mRNA selection, yielding the 30S pre-initiation complex (PIC). Upon addition of the 50S ribosomal subunit IF-1, IF-2 and IF-3 are released leaving the mature 70S translation initiation complex. The chain is Translation initiation factor IF-1 from Rhodopseudomonas palustris (strain BisB18).